We begin with the raw amino-acid sequence, 1241 residues long: Interphotoreceptor matrix proteoglycan 2 (1241 aa).

An N-terminal signal peptide occupies residues M1 to S28. At E29–V1104 the chain is on the extracellular side. An O-linked (GalNAc...) threonine glycan is attached at T193. Residues A206–A234 form a disordered region. Residues S211–Q229 show a composition bias toward polar residues. N225 carries an N-linked (GlcNAc...) asparagine glycan. O-linked (GalNAc...) threonine glycosylation occurs at T231. In terms of domain architecture, SEA 1 spans A235–N349. Residues R255–R263 are hyaluronan-binding motif involved in chondroitin sulfate A-binding. N-linked (GlcNAc...) asparagine glycans are attached at residues N297, N316, and N366. O-linked (GalNAc...) threonine glycans are attached at residues T429, T430, and T431. Over residues T431–S443 the composition is skewed to low complexity. Disordered stretches follow at residues T431–G456 and V500–S520. T817 carries O-linked (GalNAc...) threonine glycosylation. Residues N841, N945, and N959 are each glycosylated (N-linked (GlcNAc...) asparagine). An SEA 2 domain is found at G900–D1013. EGF-like domains are found at residues D1013–Q1054 and S1055–E1096. Intrachain disulfides connect C1017–C1028, C1022–C1039, C1041–C1053, C1057–C1070, C1064–C1080, and C1082–C1095. The segment at R1083–R1091 is hyaluronan-binding motif involved in chondroitin sulfate C-binding. The chain crosses the membrane as a helical span at residues I1105 to F1125. Topologically, residues L1126–L1241 are cytoplasmic. The tract at residues K1128 to R1136 is hyaluronan-binding motif involved in chondroitin sulfate A- and C-binding. Residues R1139–R1145 form a hyaluronan-binding motif involved in chondroitin sulfate C-binding region. The tract at residues K1210 to R1218 is hyaluronan-binding motif involved in chondroitin sulfate A- and C-binding motif.

In terms of tissue distribution, expressed in the pineal gland and the outer layer of the retina.

The protein localises to the photoreceptor outer segment membrane. It is found in the photoreceptor inner segment membrane. The protein resides in the secreted. It localises to the extracellular space. Its subcellular location is the extracellular matrix. The protein localises to the interphotoreceptor matrix. In terms of biological role, chondroitin sulfate- and hyaluronan-binding proteoglycan involved in the organization of interphotoreceptor matrix; may participate in the maturation and maintenance of the light-sensitive photoreceptor outer segment. Binds heparin. This is Interphotoreceptor matrix proteoglycan 2 (Impg2) from Rattus norvegicus (Rat).